The chain runs to 277 residues: Inositol monophosphatase 1 (277 aa).

Mg(2+) contacts are provided by Glu70, Asp90, Ile92, and Asp93. Glu70 lines the substrate pocket. 92–95 (IDGT) is a binding site for substrate. Phosphothreonine is present on Thr168. Substrate contacts are provided by residues 194-196 (GTA), Glu213, and Asp220. Position 220 (Asp220) interacts with Mg(2+).

Belongs to the inositol monophosphatase superfamily. Homodimer. It depends on Mg(2+) as a cofactor.

Its subcellular location is the cytoplasm. The enzyme catalyses a myo-inositol phosphate + H2O = myo-inositol + phosphate. It catalyses the reaction 1D-myo-inositol 1-phosphate + H2O = myo-inositol + phosphate. It carries out the reaction 1D-myo-inositol 2-phosphate + H2O = myo-inositol + phosphate. The catalysed reaction is 1D-myo-inositol 3-phosphate + H2O = myo-inositol + phosphate. The enzyme catalyses 1D-myo-inositol 4-phosphate + H2O = myo-inositol + phosphate. It catalyses the reaction 1D-myo-inositol 5-phosphate + H2O = myo-inositol + phosphate. It carries out the reaction 1D-myo-inositol 6-phosphate + H2O = myo-inositol + phosphate. The catalysed reaction is scyllo-inositol 1-phosphate + H2O = scyllo-inositol + phosphate. The enzyme catalyses alpha-D-galactose 1-phosphate + H2O = D-galactose + phosphate. It catalyses the reaction alpha-D-glucose 1-phosphate + H2O = D-glucose + phosphate. It carries out the reaction D-glucose 6-phosphate + H2O = D-glucose + phosphate. The catalysed reaction is beta-D-fructose 1-phosphate + H2O = D-fructose + phosphate. The enzyme catalyses glycerol 2-phosphate + H2O = glycerol + phosphate. It catalyses the reaction adenosine 2'-phosphate + H2O = adenosine + phosphate. The protein operates within polyol metabolism; myo-inositol biosynthesis; myo-inositol from D-glucose 6-phosphate: step 2/2. Inhibited by Li(+), Ca(2+) and Mn(2+), but also by Mg(2+) at concentrations above 3 mM. Functionally, phosphatase involved in the dephosphorylation of myo-inositol monophosphate to generate myo-inositol. Is also able to dephosphorylate scyllo-inositol-phosphate, myo-inositol 1,4-diphosphate, scyllo-inositol-1,3-diphosphate and scyllo-inositol-1,4-diphosphate. Also dephosphorylates in vitro other sugar-phosphates including D-galactose-1-phosphate, glucose-1-phosphate, glucose-6-phosphate, fructose-1-phosphate, beta-glycerophosphate and 2'-AMP. Responsible for the provision of inositol required for synthesis of phosphatidylinositol and polyphosphoinositides, and involved in maintaining normal brain function. Has been implicated as the pharmacological target for lithium Li(+) action in brain. The sequence is that of Inositol monophosphatase 1 (IMPA1) from Sus scrofa (Pig).